The primary structure comprises 462 residues: L-seryl-tRNA(Sec) selenium transferase (462 aa).

Lysine 292 carries the post-translational modification N6-(pyridoxal phosphate)lysine.

Belongs to the SelA family. It depends on pyridoxal 5'-phosphate as a cofactor.

The protein resides in the cytoplasm. The catalysed reaction is L-seryl-tRNA(Sec) + selenophosphate + H(+) = L-selenocysteinyl-tRNA(Sec) + phosphate. It functions in the pathway aminoacyl-tRNA biosynthesis; selenocysteinyl-tRNA(Sec) biosynthesis; selenocysteinyl-tRNA(Sec) from L-seryl-tRNA(Sec) (bacterial route): step 1/1. Functionally, converts seryl-tRNA(Sec) to selenocysteinyl-tRNA(Sec) required for selenoprotein biosynthesis. This is L-seryl-tRNA(Sec) selenium transferase from Geotalea uraniireducens (strain Rf4) (Geobacter uraniireducens).